The primary structure comprises 248 residues: 14-3-3 protein sigma (248 aa).

Phosphoserine occurs at positions 5, 74, and 248.

Belongs to the 14-3-3 family. In terms of assembly, homodimer. Interacts with KRT17 and SAMSN1. Found in a complex with XPO7, EIF4A1, ARHGAP1, VPS26A, VPS29 and VPS35. Interacts with GAB2. Interacts with SRPK2. Interacts with COPS6. Interacts with COP1; this interaction leads to proteasomal degradation. Interacts with the 'Thr-369' phosphorylated form of DAPK2. Interacts with PI4KB. Interacts with SLITRK1. Interacts with LRRK2; this interaction is dependent on LRRK2 phosphorylation. Interacts with PKP3 (via N-terminus); the interaction maintains the cytoplasmic pool of PKP3, facilitates PKP3 exchange at desmosomes and restricts PKP3 localization to existing desmosome cell junctions. Interacts with LCP2. Post-translationally, ubiquitinated. Ubiquitination by RFFL induces proteasomal degradation and indirectly regulates p53/TP53 activation. In terms of tissue distribution, expressed in dorsal skin (at protein level). Expressed in the basal layer of skin epithelium and in outer root sheath of hair follicle.

The protein resides in the cytoplasm. Its subcellular location is the nucleus. It localises to the secreted. Adapter protein implicated in the regulation of a large spectrum of both general and specialized signaling pathways. Binds to a large number of partners, usually by recognition of a phosphoserine or phosphothreonine motif. Binding generally results in the modulation of the activity of the binding partner. Promotes cytosolic retention of GBP1 GTPase by binding to phosphorylated GBP1, thereby inhibiting the innate immune response. Also acts as a TP53/p53-regulated inhibitor of G2/M progression. When bound to KRT17, regulates protein synthesis and epithelial cell growth by stimulating Akt/mTOR pathway. Acts to maintain desmosome cell junction adhesion in epithelial cells via interacting with and sequestering PKP3 to the cytoplasm, thereby restricting its translocation to existing desmosome structures and therefore maintaining desmosome protein homeostasis. Also acts to facilitate PKP3 exchange at desmosome plaques, thereby maintaining keratinocyte intercellular adhesion. May also regulate MDM2 autoubiquitination and degradation and thereby activate p53/TP53. In Mus musculus (Mouse), this protein is 14-3-3 protein sigma (Sfn).